Reading from the N-terminus, the 317-residue chain is Transaldolase 2 (317 aa).

K132 functions as the Schiff-base intermediate with substrate in the catalytic mechanism.

The protein belongs to the transaldolase family. Type 1 subfamily. Homodimer.

The protein resides in the cytoplasm. It carries out the reaction D-sedoheptulose 7-phosphate + D-glyceraldehyde 3-phosphate = D-erythrose 4-phosphate + beta-D-fructose 6-phosphate. It participates in carbohydrate degradation; pentose phosphate pathway; D-glyceraldehyde 3-phosphate and beta-D-fructose 6-phosphate from D-ribose 5-phosphate and D-xylulose 5-phosphate (non-oxidative stage): step 2/3. Transaldolase is important for the balance of metabolites in the pentose-phosphate pathway. In Pectobacterium atrosepticum (strain SCRI 1043 / ATCC BAA-672) (Erwinia carotovora subsp. atroseptica), this protein is Transaldolase 2.